The sequence spans 1734 residues: Protein TIC 214 (1734 aa).

The next 6 membrane-spanning stretches (helical) occupy residues 19–39 (IINS…FSIG), 68–88 (FIAG…HLAL), 91–111 (PHTI…WNNH), 133–153 (VFLN…SSML), 176–196 (VGWL…LVWI), and 227–247 (IFSI…PSPI). Residues 1433–1485 (NLNNEEKELADEVELESDNEKQINPESALSNQEKTIQEIYAESKKKKRQNKKQ) are a coiled coil.

The protein belongs to the TIC214 family. Part of the Tic complex.

It is found in the plastid. It localises to the chloroplast inner membrane. Involved in protein precursor import into chloroplasts. May be part of an intermediate translocation complex acting as a protein-conducting channel at the inner envelope. This chain is Protein TIC 214, found in Lepidium virginicum (Virginia pepperweed).